The sequence spans 317 residues: Probable pathogenesis-related protein CaO19.6200 (317 aa).

Positions 1-23 are cleaved as a signal peptide; the sequence is MKFLQSFPVILAVFSFAANLVSS. Disordered stretches follow at residues 52–116 and 155–179; these read RLET…TTVT and PSAPKPQPQPQPQENNSGTNDDSQL. Residues 58 to 76 are compositionally biased toward low complexity; it reads PTSTTTTIVIPSSKPSSPE. 2 stretches are compositionally biased toward polar residues: residues 84-116 and 168-179; these read QPMFQSPSPVQITPSTTSINNAPSPTKPETTVT and ENNSGTNDDSQL. A glycan (N-linked (GlcNAc...) asparagine) is linked at asparagine 169. The SCP domain maps to 187 to 297; sequence LEAHNIKRAS…GWGLYIICNY (111 aa).

This sequence belongs to the CRISP family.

The protein resides in the secreted. Its function is as follows. Secreted protein that acts as a virulence factor during infections. This is Probable pathogenesis-related protein CaO19.6200 from Candida albicans (strain SC5314 / ATCC MYA-2876) (Yeast).